The primary structure comprises 133 residues: Small ribosomal subunit protein uS11 (133 aa).

Belongs to the universal ribosomal protein uS11 family. Part of the 30S ribosomal subunit.

Its function is as follows. Located on the platform of the 30S subunit. The protein is Small ribosomal subunit protein uS11 of Aeropyrum pernix (strain ATCC 700893 / DSM 11879 / JCM 9820 / NBRC 100138 / K1).